We begin with the raw amino-acid sequence, 118 residues long: NADH-ubiquinone oxidoreductase chain 3 (118 aa).

3 consecutive transmembrane segments (helical) span residues 6 to 26 (IFVY…VSFL), 62 to 82 (LVSI…PWAV), and 87 to 107 (IGLF…IGFV).

This sequence belongs to the complex I subunit 3 family.

It localises to the mitochondrion membrane. The catalysed reaction is a ubiquinone + NADH + 5 H(+)(in) = a ubiquinol + NAD(+) + 4 H(+)(out). Core subunit of the mitochondrial membrane respiratory chain NADH dehydrogenase (Complex I) that is believed to belong to the minimal assembly required for catalysis. Complex I functions in the transfer of electrons from NADH to the respiratory chain. The immediate electron acceptor for the enzyme is believed to be ubiquinone. The sequence is that of NADH-ubiquinone oxidoreductase chain 3 (ND3) from Marchantia polymorpha (Common liverwort).